A 1048-amino-acid polypeptide reads, in one-letter code: [F-actin]-monooxygenase MICAL1 (1048 aa).

Positions 1–489 (MASPASTNPA…QDLYDMMDKE (489 aa)) are monooxygenase domain. Residues cysteine 95, 114 to 116 (EKR), 121 to 123 (RHN), phenylalanine 181, tyrosine 293, and aspartate 393 contribute to the FAD site. At threonine 475 the chain carries Phosphothreonine. A compositionally biased stretch (basic and acidic residues) spans 488–502 (KEHAQRKSDEPDSRK). Residues 488–508 (KEHAQRKSDEPDSRKTTTGSA) are disordered. One can recognise a Calponin-homology (CH) domain in the interval 507-611 (SAGTEELLHW…YLSHFHSAFK (105 aa)). Serine 616 carries the phosphoserine modification. Positions 643–676 (TRAKVDEETPSTEEPPVSEPSMSPNTPELSEHQE) are disordered. Residues 654-666 (TEEPPVSEPSMSP) show a composition bias toward low complexity. The 63-residue stretch at 681-743 (ELCELCGKHL…LQHLPQEDQK (63 aa)) folds into the LIM zinc-binding domain. Zn(2+) is bound by residues cysteine 683, cysteine 686, histidine 704, cysteine 707, cysteine 710, cysteine 713, cysteine 733, and histidine 736. 3 disordered regions span residues 741–787 (DQKE…QPAR), 805–825 (IIPDSGAEPPPKPPRSCSDLA), and 839–873 (PVQAPQVPEAIEKGDDEEEEEEEEEEEEEPLPPLE). A compositionally biased stretch (polar residues) spans 747–765 (NNGSLESQELPTPGDSNMQ). Residues 772–787 (PVTRVSPVPSPSQPAR) show a composition bias toward low complexity. 2 positions are modified to phosphoserine: serine 777 and serine 781. 3 coiled-coil regions span residues 847–867 (EAIEKGDDEEEEEEEEEEEEE), 906–949 (EEEM…ESSS), and 974–1031 (EEAE…VNQR). The span at 852-868 (GDDEEEEEEEEEEEEEP) shows a compositional bias: acidic residues. Residues 905–1048 (KEEEMKRFCK…EERRLREMPA (144 aa)) form the bMERB domain.

Belongs to the Mical family. In terms of assembly, associates with the SH3 domain of NEDD9. Interacts with VIM and PLXNA3. Interacts with RAB1B, RAB8A, RAB10, RAB13 and RAB15 (in their GTP-bound forms); binding to RAB1B is of low affinity compared to other Rab proteins; at least in case of RAB8A and RAB10 can bind 2 molecules of the Rab proteins simultaneously. Interacts with STK38 and STK38L. Interacts with GRAF1/ARHGAP26, GRAF2/ARHGAP10, RAB8A, RAB8B and RAB10; may bind simultaneously to GRAFs and Rabs and connects GRAFs to Rabs. Does not interact with RAB1 and RAB11A. FAD serves as cofactor. In terms of tissue distribution, expressed in the postnatal and adult hippocampus; found in dentate gyrus, the polymorphic layer, cornu ammonis (CA) 1-3 and in mossy fibers of the striatum lucidum. In adult hippocampus strongly expressed in CA3 pyramidial neurons.

The protein resides in the cytoplasm. It localises to the cytoskeleton. It is found in the endosome membrane. The protein localises to the midbody. The enzyme catalyses L-methionyl-[F-actin] + NADPH + O2 + H(+) = L-methionyl-(R)-S-oxide-[F-actin] + NADP(+) + H2O. It carries out the reaction NADPH + O2 + H(+) = H2O2 + NADP(+). Functionally, monooxygenase that promotes depolymerization of F-actin by mediating oxidation of specific methionine residues on actin to form methionine-sulfoxide, resulting in actin filament disassembly and preventing repolymerization. In the absence of actin, it also functions as a NADPH oxidase producing H(2)O(2). Acts as a cytoskeletal regulator that connects NEDD9 to intermediate filaments. Also acts as a negative regulator of apoptosis via its interaction with STK38 and STK38L; acts by antagonizing STK38 and STK38L activation by MST1/STK4. Involved in regulation of lamina-specific connectivity in the nervous system such as the development of lamina-restricted hippocampal connections. Through redox regulation of the actin cytoskeleton controls the intracellular distribution of secretory vesicles containing L1/neurofascin/NgCAM family proteins in neurons, thereby regulating their cell surface levels. May act as Rab effector protein and play a role in vesicle trafficking. Promotes endosomal tubule extension by associating with RAB8 (RAB8A or RAB8B), RAB10 and GRAF (GRAF1/ARHGAP26 or GRAF2/ARHGAP10) on the endosomal membrane which may connect GRAFs to Rabs, thereby participating in neosynthesized Rab8-Rab10-Rab11-dependent protein export. The sequence is that of [F-actin]-monooxygenase MICAL1 (Mical1) from Mus musculus (Mouse).